Consider the following 115-residue polypeptide: Nucleoid-associated protein NATL1_00191 (115 aa).

The tract at residues S89–S115 is disordered.

It belongs to the YbaB/EbfC family. Homodimer.

It is found in the cytoplasm. Its subcellular location is the nucleoid. Functionally, binds to DNA and alters its conformation. May be involved in regulation of gene expression, nucleoid organization and DNA protection. This is Nucleoid-associated protein NATL1_00191 from Prochlorococcus marinus (strain NATL1A).